Reading from the N-terminus, the 105-residue chain is Large ribosomal subunit protein uL24 (105 aa).

Belongs to the universal ribosomal protein uL24 family. In terms of assembly, part of the 50S ribosomal subunit.

Its function is as follows. One of two assembly initiator proteins, it binds directly to the 5'-end of the 23S rRNA, where it nucleates assembly of the 50S subunit. One of the proteins that surrounds the polypeptide exit tunnel on the outside of the subunit. The sequence is that of Large ribosomal subunit protein uL24 from Anaplasma marginale (strain St. Maries).